Consider the following 275-residue polypeptide: Calcium-binding protein 4 (275 aa).

Residues 1–12 are compositionally biased toward polar residues; that stretch reads MTTEQARGQQGP. The interval 1 to 112 is disordered; it reads MTTEQARGQQ…SLHDAAQRTY (112 aa). Basic residues predominate over residues 38–55; the sequence is TRKRSKKERGLRGSRKRT. At S42 the chain carries Phosphoserine. EF-hand domains are found at residues 129 to 164, 183 to 200, 206 to 241, and 243 to 275; these read EELD…LGYM, GRVD…KLRE, LGVR…LLGE, and LAGP…LSRH. 5 residues coordinate Ca(2+): D142, D144, D146, Y148, and E153. Positions 219, 221, 223, 225, 230, 256, 258, 260, 262, and 267 each coordinate Ca(2+).

Interacts with CACNA1F and CACNA1D (via IQ domain) in a calcium independent manner. Interacts (via N-terminus) with UNC119. Phosphorylated. Phosphorylation levels change with the light conditions and regulate the activity. In terms of tissue distribution, expressed in retina and in the inner hair cells (IHC) of the cochlea.

The protein localises to the cytoplasm. Its subcellular location is the presynapse. Functionally, involved in normal synaptic function through regulation of Ca(2+) influx and neurotransmitter release in photoreceptor synaptic terminals and in auditory transmission. Modulator of CACNA1D and CACNA1F, suppressing the calcium-dependent inactivation and shifting the activation range to more hyperpolarized voltages. This Homo sapiens (Human) protein is Calcium-binding protein 4 (CABP4).